The following is a 100-amino-acid chain: Mitochondrial import inner membrane translocase subunit Tim10 B (100 aa).

The Twin CX3C motif signature appears at 25 to 49; it reads CFQRCVPSLHHRALDAEEEACLHSC. 2 cysteine pairs are disulfide-bonded: Cys25-Cys49 and Cys29-Cys45.

Belongs to the small Tim family. As to quaternary structure, component of the TIM22 complex, which core is composed of TIMM22, associated with TIMM10 (TIMM10A and/or TIMM10B), TIMM9, AGK and TIMM29.

The protein localises to the mitochondrion inner membrane. Component of the TIM22 complex, a complex that mediates the import and insertion of multi-pass transmembrane proteins into the mitochondrial inner membrane. The TIM22 complex forms a twin-pore translocase that uses the membrane potential as the external driving force. In the TIM22 complex, it may act as a docking point for the soluble 70 kDa complex that guides the target proteins in transit through the aqueous mitochondrial intermembrane space. The protein is Mitochondrial import inner membrane translocase subunit Tim10 B (Timm10b) of Mus musculus (Mouse).